Consider the following 157-residue polypeptide: Small ribosomal subunit protein uS7c (157 aa).

It belongs to the universal ribosomal protein uS7 family. Part of the 30S ribosomal subunit.

It localises to the plastid. The protein resides in the organellar chromatophore. Functionally, one of the primary rRNA binding proteins, it binds directly to 16S rRNA where it nucleates assembly of the head domain of the 30S subunit. This Paulinella chromatophora protein is Small ribosomal subunit protein uS7c (rps7).